The primary structure comprises 484 residues: tRNA sulfurtransferase (484 aa).

Positions 63 to 167 (KEMGERLTCM…DKRLFVIHSQ (105 aa)) constitute a THUMP domain. Residues 185–186 (LM), Lys-267, Gly-289, and Gln-298 contribute to the ATP site. A disulfide bridge connects residues Cys-346 and Cys-457. One can recognise a Rhodanese domain in the interval 405–483 (ALAGQIVIDI…GHANVRVYRP (79 aa)). Catalysis depends on Cys-457, which acts as the Cysteine persulfide intermediate.

Belongs to the ThiI family.

Its subcellular location is the cytoplasm. It carries out the reaction [ThiI sulfur-carrier protein]-S-sulfanyl-L-cysteine + a uridine in tRNA + 2 reduced [2Fe-2S]-[ferredoxin] + ATP + H(+) = [ThiI sulfur-carrier protein]-L-cysteine + a 4-thiouridine in tRNA + 2 oxidized [2Fe-2S]-[ferredoxin] + AMP + diphosphate. The catalysed reaction is [ThiS sulfur-carrier protein]-C-terminal Gly-Gly-AMP + S-sulfanyl-L-cysteinyl-[cysteine desulfurase] + AH2 = [ThiS sulfur-carrier protein]-C-terminal-Gly-aminoethanethioate + L-cysteinyl-[cysteine desulfurase] + A + AMP + 2 H(+). It functions in the pathway cofactor biosynthesis; thiamine diphosphate biosynthesis. In terms of biological role, catalyzes the ATP-dependent transfer of a sulfur to tRNA to produce 4-thiouridine in position 8 of tRNAs, which functions as a near-UV photosensor. Also catalyzes the transfer of sulfur to the sulfur carrier protein ThiS, forming ThiS-thiocarboxylate. This is a step in the synthesis of thiazole, in the thiamine biosynthesis pathway. The sulfur is donated as persulfide by IscS. In Pseudomonas fluorescens (strain Pf0-1), this protein is tRNA sulfurtransferase.